Here is a 369-residue protein sequence, read N- to C-terminus: uncharacterized protein (369 aa).

This is an uncharacterized protein from Caenorhabditis elegans.